Consider the following 130-residue polypeptide: Small ribosomal subunit protein uS9 (130 aa).

The protein belongs to the universal ribosomal protein uS9 family.

This is Small ribosomal subunit protein uS9 from Vibrio cholerae serotype O1 (strain ATCC 39541 / Classical Ogawa 395 / O395).